We begin with the raw amino-acid sequence, 244 residues long: Proteasome subunit alpha type-5 (244 aa).

It belongs to the peptidase T1A family. In terms of assembly, the 26S proteasome consists of a 20S proteasome core and two 19S regulatory subunits. The 20S proteasome core is composed of 28 subunits that are arranged in four stacked rings, resulting in a barrel-shaped structure. The two end rings are each formed by seven alpha subunits, and the two central rings are each formed by seven beta subunits. The catalytic chamber with the active sites is on the inside of the barrel.

It is found in the cytoplasm. It localises to the nucleus. Its function is as follows. The proteasome is a multicatalytic proteinase complex which is characterized by its ability to cleave peptides with Arg, Phe, Tyr, Leu, and Glu adjacent to the leaving group at neutral or slightly basic pH. The proteasome has an ATP-dependent proteolytic activity. The polypeptide is Proteasome subunit alpha type-5 (Prosalpha5) (Drosophila melanogaster (Fruit fly)).